We begin with the raw amino-acid sequence, 428 residues long: Cell division protein FtsZ (428 aa).

Residues 73-77, 160-162, Glu-191, Arg-195, and Asp-239 contribute to the GTP site; these read GGGGN and GTG. The disordered stretch occupies residues 378-428; that stretch reads NAANARVVSAPPKRTPTQTPLTNSPAPTPEPKEKSGLDIPDFLQRRRPPKN. Over residues 392 to 402 the composition is skewed to polar residues; that stretch reads TPTQTPLTNSP.

This sequence belongs to the FtsZ family. In terms of assembly, homodimer. Polymerizes to form a dynamic ring structure in a strictly GTP-dependent manner. Interacts directly with several other division proteins.

The protein resides in the cytoplasm. Essential cell division protein that forms a contractile ring structure (Z ring) at the future cell division site. The regulation of the ring assembly controls the timing and the location of cell division. One of the functions of the FtsZ ring is to recruit other cell division proteins to the septum to produce a new cell wall between the dividing cells. Binds GTP and shows GTPase activity. The chain is Cell division protein FtsZ from Nostoc sp. (strain PCC 7120 / SAG 25.82 / UTEX 2576).